The sequence spans 278 residues: Large ribosomal subunit protein uL2 (278 aa).

The interval 208 to 278 is disordered; sequence AGRSRWMGKR…LIIRHRKGRK (71 aa). A compositionally biased stretch (basic residues) spans 209–219; the sequence is GRSRWMGKRPQ. Over residues 258–270 the composition is skewed to basic and acidic residues; it reads KTRDSKKASEKLI.

Belongs to the universal ribosomal protein uL2 family. As to quaternary structure, part of the 50S ribosomal subunit. Forms a bridge to the 30S subunit in the 70S ribosome.

Functionally, one of the primary rRNA binding proteins. Required for association of the 30S and 50S subunits to form the 70S ribosome, for tRNA binding and peptide bond formation. It has been suggested to have peptidyltransferase activity; this is somewhat controversial. Makes several contacts with the 16S rRNA in the 70S ribosome. The sequence is that of Large ribosomal subunit protein uL2 from Lactobacillus delbrueckii subsp. bulgaricus (strain ATCC 11842 / DSM 20081 / BCRC 10696 / JCM 1002 / NBRC 13953 / NCIMB 11778 / NCTC 12712 / WDCM 00102 / Lb 14).